The sequence spans 248 residues: Biosynthetic peptidoglycan transglycosylase (248 aa).

The helical transmembrane segment at 17–37 (LLIFFFASTILAVIVYRFMPV) threads the bilayer.

Belongs to the glycosyltransferase 51 family.

The protein resides in the cell inner membrane. It carries out the reaction [GlcNAc-(1-&gt;4)-Mur2Ac(oyl-L-Ala-gamma-D-Glu-L-Lys-D-Ala-D-Ala)](n)-di-trans,octa-cis-undecaprenyl diphosphate + beta-D-GlcNAc-(1-&gt;4)-Mur2Ac(oyl-L-Ala-gamma-D-Glu-L-Lys-D-Ala-D-Ala)-di-trans,octa-cis-undecaprenyl diphosphate = [GlcNAc-(1-&gt;4)-Mur2Ac(oyl-L-Ala-gamma-D-Glu-L-Lys-D-Ala-D-Ala)](n+1)-di-trans,octa-cis-undecaprenyl diphosphate + di-trans,octa-cis-undecaprenyl diphosphate + H(+). Its pathway is cell wall biogenesis; peptidoglycan biosynthesis. Its function is as follows. Peptidoglycan polymerase that catalyzes glycan chain elongation from lipid-linked precursors. The sequence is that of Biosynthetic peptidoglycan transglycosylase from Bacteroides thetaiotaomicron (strain ATCC 29148 / DSM 2079 / JCM 5827 / CCUG 10774 / NCTC 10582 / VPI-5482 / E50).